We begin with the raw amino-acid sequence, 459 residues long: MAEEGPPEPSIDFVPALCFVPRGVAKDRPDKIVLTQAELARIIGDTQQELDEESDDDAEEGENAEEDQNDMDVDDHADANSENRDPQDEFQFQEYDNEANANVTSLANIVDAGEQIPDEDEDSEAEDEVIKPSDNLILVGHVQDDAASMEVWVFNQEEEALYTHHDFLLPSFPLCIEWMNHDAGSEKAGNMCAIGCMDPIITVWDLDIQDAIEPTFKLGSKGSRKQNKEQYGHKDAVLDLSWNTNFEHILASGSVDQTVILWDMDEGQPHTTITAFGKQIQSLEFHPQEAQSILTGCADGYVRLFDCRDAEGVNSSSIEWKVDGEVEKVLWHPTQTDYFIVGTNDGTLHYADKRSPGQLLWSVKAHNEEISGVCFNNQKPNLLTSTSTEGTLKVWNFDGTEAKHVYEHEFNMGRLQCMRQCPEDPYTLAFGGEKPPRCAIFNIKNSIAVRRTFGIPDAE.

The disordered stretch occupies residues 44–84; the sequence is GDTQQELDEESDDDAEEGENAEEDQNDMDVDDHADANSENR. Residues 48-73 show a composition bias toward acidic residues; it reads QELDEESDDDAEEGENAEEDQNDMDV. Basic and acidic residues predominate over residues 74-84; it reads DDHADANSENR. 5 WD repeats span residues 168–214, 232–272, 275–315, 321–361, and 365–405; these read LLPS…AIEP, GHKD…PHTT, AFGK…GVNS, KVDG…QLLW, and AHNE…AKHV. Ser385 carries the phosphoserine modification.

It belongs to the WD repeat PWP1 family. Interacts with Mybbp1A. Post-translationally, phosphorylated in response to nutrient-activated TORC1 signaling. As to expression, detected in the germline of adult testis and ovary (at protein level). Detected in ovary somatic cells, in zfh1-positive cyst cells in the testis and absent in differentiated cyst cells (at protein level).

The protein resides in the nucleus. It is found in the nucleolus. It localises to the chromosome. Its subcellular location is the nucleoplasm. Chromatin-associated factor that regulates transcription. Regulates Pol I-mediated rRNA biogenesis and, probably, Pol III-mediated transcription. Regulates the localization to the nucleolus of Cdk7, a regulator of the Pol I-elongation factor TFIIH. Acts as a regulator of cell proliferation and tissue growth as part of the TORC1 and Myc signaling pathway in response to nutrients. Required in males for both germline stem cell (GSC) maintenance and early stages of germ cell differentiation of germ cell cysts. Not required for female germline stem cell (GSC) maintenance, but necessary to regulate germ cell differentiation and egg chamber development. In female somatic cells, required for follicle stem cell survival and maintenance. This chain is Periodic tryptophan protein 1 homolog, found in Drosophila melanogaster (Fruit fly).